We begin with the raw amino-acid sequence, 440 residues long: Amino-acid acetyltransferase (440 aa).

Positions 289–429 (ETIRLATVSD…QHYNYQRRSK (141 aa)) constitute an N-acetyltransferase domain.

The protein belongs to the acetyltransferase family. ArgA subfamily.

The protein localises to the cytoplasm. The enzyme catalyses L-glutamate + acetyl-CoA = N-acetyl-L-glutamate + CoA + H(+). The protein operates within amino-acid biosynthesis; L-arginine biosynthesis; N(2)-acetyl-L-ornithine from L-glutamate: step 1/4. The protein is Amino-acid acetyltransferase (argA) of Pasteurella multocida (strain Pm70).